The chain runs to 631 residues: 1-deoxy-D-xylulose-5-phosphate synthase (631 aa).

Thiamine diphosphate contacts are provided by residues His-87 and 128–130 (GHS). Position 159 (Asp-159) interacts with Mg(2+). Thiamine diphosphate contacts are provided by residues 160–161 (GA), Asn-188, Phe-295, and Glu-377. Mg(2+) is bound at residue Asn-188.

This sequence belongs to the transketolase family. DXPS subfamily. As to quaternary structure, homodimer. Requires Mg(2+) as cofactor. Thiamine diphosphate serves as cofactor.

It catalyses the reaction D-glyceraldehyde 3-phosphate + pyruvate + H(+) = 1-deoxy-D-xylulose 5-phosphate + CO2. Its pathway is metabolic intermediate biosynthesis; 1-deoxy-D-xylulose 5-phosphate biosynthesis; 1-deoxy-D-xylulose 5-phosphate from D-glyceraldehyde 3-phosphate and pyruvate: step 1/1. Functionally, catalyzes the acyloin condensation reaction between C atoms 2 and 3 of pyruvate and glyceraldehyde 3-phosphate to yield 1-deoxy-D-xylulose-5-phosphate (DXP). This chain is 1-deoxy-D-xylulose-5-phosphate synthase, found in Pseudomonas entomophila (strain L48).